The following is a 172-amino-acid chain: Translationally-controlled tumor protein (172 aa).

Residues Met-1 to Cys-172 enclose the TCTP domain. Ser-46 is modified (phosphoserine; by PLK1). A Phosphoserine modification is found at Ser-53. Ser-64 carries the phosphoserine; by PLK1 modification. The required for reduction of TSC22D1 protein stability stretch occupies residues Val-70–Cys-172.

Belongs to the TCTP family. As to quaternary structure, homodimer. Interacts with STEAP3. Interacts with TSC22D1; interaction results in the destabilization of TSC22D1 protein.

It is found in the cytoplasm. Its function is as follows. Involved in calcium binding and microtubule stabilization. Acts as a negative regulator of TSC22D1-mediated apoptosis, via interaction with and destabilization of TSC22D1 protein. The protein is Translationally-controlled tumor protein (TPT1) of Oryctolagus cuniculus (Rabbit).